We begin with the raw amino-acid sequence, 713 residues long: Polyribonucleotide nucleotidyltransferase (713 aa).

2 residues coordinate Mg(2+): Asp-487 and Asp-493. The KH domain occupies 554 to 613 (PRIEVMNIPVDKIREVIGSGGKVIREIVEKTGAKINIEDDGTVKIASASGKEIEAARKWI). One can recognise an S1 motif domain in the interval 623–691 (GQIYEGTVVK…ERGKVRLSMK (69 aa)).

It belongs to the polyribonucleotide nucleotidyltransferase family. Mg(2+) serves as cofactor.

It localises to the cytoplasm. It carries out the reaction RNA(n+1) + phosphate = RNA(n) + a ribonucleoside 5'-diphosphate. Its function is as follows. Involved in mRNA degradation. Catalyzes the phosphorolysis of single-stranded polyribonucleotides processively in the 3'- to 5'-direction. The sequence is that of Polyribonucleotide nucleotidyltransferase from Agrobacterium fabrum (strain C58 / ATCC 33970) (Agrobacterium tumefaciens (strain C58)).